The chain runs to 473 residues: Envelope glycoprotein M (473 aa).

The Intravirion portion of the chain corresponds to 1-32 (MGRPAPRGSPDSAPPTKGMTGARTAWWVWCVQ). A helical transmembrane segment spans residues 33 to 53 (VATFVVSAVCVTGLLVLASVF). The Virion surface portion of the chain corresponds to 54 to 90 (RARFPCFYATASSYAGVNSTAEVRGGVAVPLRLDTQS). Residues 91-111 (LVGTYVITAVLLLAVAVYAVV) form a helical membrane-spanning segment. Residues 112 to 137 (GAVTSRYDRALDAGRRLAAARMAMPH) are Intravirion-facing. The helical transmembrane segment at 138 to 158 (ATLIAGNVCSWLLQITVLLLA) threads the bilayer. The Virion surface portion of the chain corresponds to 159–163 (HRISQ). Residues 164–184 (LAHLVYVLHFACLVYFAAHFC) form a helical membrane-spanning segment. At 185-216 (TRGVLSGTYLRQVHGLMELAPTHHRVVGPARA) the chain is on the intravirion side. A helical transmembrane segment spans residues 217-237 (VLTNALLLGVFLCTADAAVSL). Residues 238–250 (NTIAAFNFNFSAP) lie on the Virion surface side of the membrane. Residues 251-271 (GMLICLTVLFAILVVSLLLVV) form a helical membrane-spanning segment. At 272 to 280 (EGVLCHYVR) the chain is on the intravirion side. A helical membrane pass occupies residues 281-301 (VLVGPHLGAVAATGIVGLACE). At 302–318 (HYYTNGYYVVETQWPGA) the chain is on the virion surface side. Residues 319 to 339 (QTGVRVALALVAAFALGMAVL) traverse the membrane as a helical segment. Residues 340–473 (RCTRAYLYHR…DPVYSTVRRW (134 aa)) are Intravirion-facing. Disordered regions lie at residues 371–399 (KRVR…PEYA) and 440–473 (HPRH…VRRW).

This sequence belongs to the herpesviridae glycoprotein M family. Interacts (via N-terminus) with gN (via N-terminus). The gM-gN heterodimer forms the gCII complex.

Its subcellular location is the virion membrane. It is found in the host Golgi apparatus. The protein localises to the host trans-Golgi network. The protein resides in the host endosome membrane. It localises to the host nucleus inner membrane. Envelope glycoprotein important for virion assembly and egress. Plays a role in the correct incorporation of gH-gL into virion membrane. Directs the glycoprotein N (gN) to the host trans-Golgi network. The polypeptide is Envelope glycoprotein M (Human herpesvirus 1 (strain 17) (HHV-1)).